The primary structure comprises 291 residues: Ribosomal RNA small subunit methyltransferase H (291 aa).

S-adenosyl-L-methionine contacts are provided by residues 31-33, Asp50, Phe77, Asp98, and Gln105; that span reads GGH.

Belongs to the methyltransferase superfamily. RsmH family.

It is found in the cytoplasm. It carries out the reaction cytidine(1402) in 16S rRNA + S-adenosyl-L-methionine = N(4)-methylcytidine(1402) in 16S rRNA + S-adenosyl-L-homocysteine + H(+). Its function is as follows. Specifically methylates the N4 position of cytidine in position 1402 (C1402) of 16S rRNA. This is Ribosomal RNA small subunit methyltransferase H from Endomicrobium trichonymphae.